A 414-amino-acid polypeptide reads, in one-letter code: Myb1 protein (414 aa).

Myb-like domains are found at residues 242 to 266 (WNEV…LYYG), 268 to 320 (FEDD…IKIN), and 328 to 381 (KVKL…TNLN).

It is found in the nucleus. Transcriptional activator. Has a role in the parasite erythrocytic cycle where it directly regulates key genes involved in cell cycle regulation and progression. Binds directly to Myb regulatory elements. The protein is Myb1 protein of Plasmodium falciparum (isolate 3D7).